A 534-amino-acid chain; its full sequence is NEDD8-activating enzyme E1 regulatory subunit (534 aa).

Alanine 2 is subject to N-acetylalanine. N6-acetyllysine occurs at positions 6 and 341. The segment at 331 to 344 (DMIADSGKYIKLQN) is interaction with UBA3.

Belongs to the ubiquitin-activating E1 family. ULA1 subfamily. As to quaternary structure, heterodimer of UBA3 and NAE1. The complex binds NEDD8 and UBE2M. Binds APP and TP53BP2. Ubiquitinated by TRIP12, leading to its degradation by the proteasome. In terms of tissue distribution, ubiquitous in fetal tissues. Expressed throughout the adult brain.

It is found in the cell membrane. Its pathway is protein modification; protein neddylation. With respect to regulation, binding of TP53BP2 to the regulatory subunit NAE1 decreases neddylation activity. Its function is as follows. Regulatory subunit of the dimeric UBA3-NAE1 E1 enzyme. E1 activates NEDD8 by first adenylating its C-terminal glycine residue with ATP, thereafter linking this residue to the side chain of the catalytic cysteine, yielding a NEDD8-UBA3 thioester and free AMP. E1 finally transfers NEDD8 to the catalytic cysteine of UBE2M. Necessary for cell cycle progression through the S-M checkpoint. Overexpression of NAE1 causes apoptosis through deregulation of NEDD8 conjugation. The covalent attachment of NEDD8 to target proteins is known as 'neddylation' and the process is involved in the regulation of cell growth, viability and development. The protein is NEDD8-activating enzyme E1 regulatory subunit (NAE1) of Homo sapiens (Human).